We begin with the raw amino-acid sequence, 140 residues long: Large ribosomal subunit protein uL13 (140 aa).

Belongs to the universal ribosomal protein uL13 family. Part of the 50S ribosomal subunit.

Functionally, this protein is one of the early assembly proteins of the 50S ribosomal subunit, although it is not seen to bind rRNA by itself. It is important during the early stages of 50S assembly. The polypeptide is Large ribosomal subunit protein uL13 (Sulfurimonas denitrificans (strain ATCC 33889 / DSM 1251) (Thiomicrospira denitrificans (strain ATCC 33889 / DSM 1251))).